The sequence spans 350 residues: GDSL esterase/lipase At2g42990 (350 aa).

Residues 1 to 24 (MATHYLSPSILCIILTTLVSIAGA) form the signal peptide. Residue Ser35 is the Nucleophile of the active site. Asn98, Asn117, and Asn141 each carry an N-linked (GlcNAc...) asparagine glycan. Residues Asp325 and His328 contribute to the active site.

Belongs to the 'GDSL' lipolytic enzyme family.

The protein resides in the secreted. The sequence is that of GDSL esterase/lipase At2g42990 from Arabidopsis thaliana (Mouse-ear cress).